The sequence spans 658 residues: Threonine--tRNA ligase (658 aa).

The 64-residue stretch at 1 to 64 (MSNTVSLQFP…GASGKVEIIT (64 aa)) folds into the TGS domain. Positions 246 to 548 (DHRRLGREMD…LIENFAGHMP (303 aa)) are catalytic. Zn(2+) is bound by residues C343, H394, and H525.

The protein belongs to the class-II aminoacyl-tRNA synthetase family. In terms of assembly, homodimer. It depends on Zn(2+) as a cofactor.

The protein localises to the cytoplasm. The enzyme catalyses tRNA(Thr) + L-threonine + ATP = L-threonyl-tRNA(Thr) + AMP + diphosphate + H(+). Functionally, catalyzes the attachment of threonine to tRNA(Thr) in a two-step reaction: L-threonine is first activated by ATP to form Thr-AMP and then transferred to the acceptor end of tRNA(Thr). Also edits incorrectly charged L-seryl-tRNA(Thr). The polypeptide is Threonine--tRNA ligase (Brucella melitensis biotype 1 (strain ATCC 23456 / CCUG 17765 / NCTC 10094 / 16M)).